The following is a 97-amino-acid chain: UPF0390 protein CNBD1430 (97 aa).

Disordered stretches follow at residues 1–57 and 75–97; these read MAQG…INNS and RNVG…GKSR. Positions 29–46 are enriched in basic and acidic residues; it reads GKREVAPKDRQRVLERSQ. Residues 48–57 show a composition bias toward polar residues; that stretch reads KQLSSKINNS.

This sequence belongs to the UPF0390 family.

This Cryptococcus neoformans var. neoformans serotype D (strain B-3501A) (Filobasidiella neoformans) protein is UPF0390 protein CNBD1430.